The chain runs to 497 residues: ATP synthase subunit alpha 2 (497 aa).

G167 to T174 contributes to the ATP binding site.

Belongs to the ATPase alpha/beta chains family. F-type ATPases have 2 components, CF(1) - the catalytic core - and CF(0) - the membrane proton channel. CF(1) has five subunits: alpha(3), beta(3), gamma(1), delta(1), epsilon(1). CF(0) has four main subunits: a(1), b(1), b'(1) and c(9-12).

It localises to the cell inner membrane. It carries out the reaction ATP + H2O + 4 H(+)(in) = ADP + phosphate + 5 H(+)(out). Its function is as follows. Produces ATP from ADP in the presence of a proton gradient across the membrane. The alpha chain is a regulatory subunit. This Cereibacter sphaeroides (strain ATCC 17023 / DSM 158 / JCM 6121 / CCUG 31486 / LMG 2827 / NBRC 12203 / NCIMB 8253 / ATH 2.4.1.) (Rhodobacter sphaeroides) protein is ATP synthase subunit alpha 2.